The chain runs to 158 residues: Ribosome maturation factor RimP (158 aa).

It belongs to the RimP family.

It localises to the cytoplasm. Required for maturation of 30S ribosomal subunits. The polypeptide is Ribosome maturation factor RimP (Lactobacillus delbrueckii subsp. bulgaricus (strain ATCC 11842 / DSM 20081 / BCRC 10696 / JCM 1002 / NBRC 13953 / NCIMB 11778 / NCTC 12712 / WDCM 00102 / Lb 14)).